We begin with the raw amino-acid sequence, 219 residues long: UPF0502 protein Gura_0277 (219 aa).

This sequence belongs to the UPF0502 family.

This chain is UPF0502 protein Gura_0277, found in Geotalea uraniireducens (strain Rf4) (Geobacter uraniireducens).